Reading from the N-terminus, the 223-residue chain is Killer cell lectin-like receptor subfamily B member 1B allele A (223 aa).

Over 1–45 (MDTAVVYADLHLARTGEPKREPPPSLSPDTCQCPRWHRLALKLGC) the chain is Cytoplasmic. The short motif at 5–10 (VVYADL) is the ITIM motif element. The LCK-binding motif signature appears at 31-34 (CQCP). A helical; Signal-anchor for type II membrane protein transmembrane segment spans residues 46-66 (ACLILLVLSVIGLGVLVLTLL). Residues 67–223 (QKPLIQNSPA…LKRESTCNDS (157 aa)) are Extracellular-facing. One can recognise a C-type lectin domain in the interval 101-211 (HQDKCFHVSQ…CDSDNIWICQ (111 aa)). Cystine bridges form between cysteine 122-cysteine 210 and cysteine 189-cysteine 202.

In terms of assembly, homodimer; disulfide-linked. Interacts with tyrosine kinase LCK. Binds PTPN6/SHP-1 in a phosphorylation-dependent manner. As to expression, expressed in a subset of natural killer cells.

Its subcellular location is the membrane. In terms of biological role, receptor for CLEC2D/OCIL. Ligand-binding contributes to inhibition of cytotoxic natural killer (NK) cells. May mediate MHC class I-independent 'missing-self' recognition of allografts, tumor cells and virus-infected cells. The polypeptide is Killer cell lectin-like receptor subfamily B member 1B allele A (Rattus norvegicus (Rat)).